The primary structure comprises 89 residues: Large ribosomal subunit protein bL31B (89 aa).

Belongs to the bacterial ribosomal protein bL31 family. Type B subfamily. As to quaternary structure, part of the 50S ribosomal subunit.

The chain is Large ribosomal subunit protein bL31B from Actinobacillus pleuropneumoniae serotype 5b (strain L20).